The primary structure comprises 1288 residues: CLIP-associating protein 2 (1288 aa).

The disordered stretch occupies residues 1–62 (MALSLSQDRS…AAKSGASKEG (62 aa)). Low complexity-rich tracts occupy residues 19 to 32 (GSRP…FKVP) and 40 to 62 (ESAS…SKEG). Residues 62–312 (GAGAVDEEDF…RTLQSCLKSS (251 aa)) are TOG 1. 3 HEAT repeats span residues 174 to 209 (HGAE…IRHT), 210 to 246 (HVPR…EWQT), and 251 to 288 (RHAA…HFPG). Disordered regions lie at residues 314–571 (SVAS…SSRL) and 614–634 (ANSD…NGSI). 2 stretches are compositionally biased toward low complexity: residues 317–337 (SLPQ…RPLS) and 347–358 (PAGSKSSGSPAS). 2 stretches are compositionally biased toward polar residues: residues 406-421 (KQTL…SQVD) and 468-478 (TALSTLSTGAQ). An SXIP motif 1 motif is present at residues 490 to 493 (SRIP). Residues 496-518 (QGCSRDSSPTRLSVAPSNISHIY) are compositionally biased toward polar residues. The SXIP motif 2 signature appears at 527-530 (SRIP). The span at 616-630 (SDASSACSERSYSSR) shows a compositional bias: low complexity. The tract at residues 638-889 (MRQTEDVAEV…TKLLQNHLRN (252 aa)) is TOG 2. HEAT repeat units lie at residues 718 to 755 (RVFS…KMGA) and 780 to 817 (LQFT…QMEP). Over residues 891 to 900 (GNTAQASIGS) the composition is skewed to polar residues. 2 disordered regions span residues 891–936 (GNTA…FDYD) and 960–1047 (SVRS…DSGV). Over residues 912 to 931 (SWSSPLTSPTNTSQNTPSPS) the composition is skewed to low complexity. Residues 963–977 (SQEDMTEPPRKREGD) show a composition bias toward basic and acidic residues. Over residues 1019–1030 (SDSSFGSSSFNK) the composition is skewed to low complexity. Residues 1036 to 1046 (DQEESLTDDSG) show a composition bias toward acidic residues. HEAT repeat units lie at residues 1047 to 1086 (VDQS…ETQL), 1091 to 1128 (EHFK…RQPW), 1167 to 1204 (ISPD…RLPK), and 1209 to 1246 (QMLP…VIGE).

Belongs to the CLASP family. As to quaternary structure, interacts with microtubules.

It localises to the cytoplasm. Its subcellular location is the cytoskeleton. The protein localises to the microtubule organizing center. It is found in the centrosome. The protein resides in the chromosome. It localises to the centromere. Its subcellular location is the kinetochore. The protein localises to the spindle. It is found in the golgi apparatus. The protein resides in the trans-Golgi network. It localises to the cell membrane. Its subcellular location is the cell projection. The protein localises to the ruffle membrane. Its function is as follows. Microtubule plus-end tracking protein that promotes the stabilization of dynamic microtubules. Involved in the nucleation of noncentrosomal microtubules originating from the trans-Golgi network (TGN). Required for the polarization of the cytoplasmic microtubule arrays in migrating cells towards the leading edge of the cell. May act at the cell cortex to enhance the frequency of rescue of depolymerizing microtubules. This cortical microtubule stabilizing activity is regulated at least in part by phosphatidylinositol 3-kinase signaling. Also performs a similar stabilizing function at the kinetochore which is essential for the bipolar alignment of chromosomes on the mitotic spindle. This chain is CLIP-associating protein 2 (clasp2), found in Danio rerio (Zebrafish).